The chain runs to 231 residues: LexA repressor (231 aa).

Residues 26 to 46 constitute a DNA-binding region (H-T-H motif); sequence FEEMKEALDLKSKSGIHRLIG. Residues Ser152 and Lys190 each act as for autocatalytic cleavage activity in the active site.

The protein belongs to the peptidase S24 family. In terms of assembly, homodimer.

The catalysed reaction is Hydrolysis of Ala-|-Gly bond in repressor LexA.. In terms of biological role, represses a number of genes involved in the response to DNA damage (SOS response), including recA and lexA. In the presence of single-stranded DNA, RecA interacts with LexA causing an autocatalytic cleavage which disrupts the DNA-binding part of LexA, leading to derepression of the SOS regulon and eventually DNA repair. In Acidiphilium cryptum (strain JF-5), this protein is LexA repressor.